The chain runs to 160 residues: Putative antiporter subunit mnhE2 (160 aa).

A run of 3 helical transmembrane segments spans residues 22 to 42 (SFQFSTFVSGFIIGLIVIYIL), 61 to 81 (FLGVYLYQLITSSISIINYIL), and 102 to 122 (WAITFLTILIIITPGSTVIRI).

The protein belongs to the CPA3 antiporters (TC 2.A.63) subunit E family. As to quaternary structure, may form a heterooligomeric complex that consists of seven subunits: mnhA2, mnhB2, mnhC2, mnhD2, mnhE2, mnhF2 and mnhG2.

It localises to the cell membrane. In Staphylococcus haemolyticus (strain JCSC1435), this protein is Putative antiporter subunit mnhE2 (mnhE2).